Consider the following 339-residue polypeptide: MTIQKNWQELIRPNKLQVTPGSDSGRFATLVAEPLERGFGQTLGNALRRVLLSSLQGAAVQSVHIDGVLHEFSSIAGVREDVTDIVLNIKDISIKMQGEGPKRMVVKKQGPGTVTAGDIQTVGDIVVLNPDLQICTLDDGAEIRMEFTVNTGKGYVAAERNRPEDAPIGLIPVDSLFSPVRKVSYKVENTREGQILDYDKLTMTIETNGAITPDDAVAYAARILQDQLNVFVNFEEPRKEVTQEIIPDLAFNPAFLKKVDELELSVRSANCLKNDNIVYIGDLVQKSEAEMLRTPNFGRKSLNEIKEVLAQMGLHLGMEVPGWPPENIDELAKRFEDHY.

The alpha N-terminal domain (alpha-NTD) stretch occupies residues 1–235 (MTIQKNWQEL…DQLNVFVNFE (235 aa)). Residues 251–339 (FNPAFLKKVD…ELAKRFEDHY (89 aa)) form an alpha C-terminal domain (alpha-CTD) region.

This sequence belongs to the RNA polymerase alpha chain family. Homodimer. The RNAP catalytic core consists of 2 alpha, 1 beta, 1 beta' and 1 omega subunit. When a sigma factor is associated with the core the holoenzyme is formed, which can initiate transcription.

It carries out the reaction RNA(n) + a ribonucleoside 5'-triphosphate = RNA(n+1) + diphosphate. Functionally, DNA-dependent RNA polymerase catalyzes the transcription of DNA into RNA using the four ribonucleoside triphosphates as substrates. This is DNA-directed RNA polymerase subunit alpha from Rhodopseudomonas palustris (strain BisA53).